The sequence spans 249 residues: Testis-expressed protein 101 (249 aa).

The signal sequence occupies residues 1 to 25; that stretch reads MGTPRIQHLLILLVLGASLLTSGLE. 2 N-linked (GlcNAc...) asparagine glycosylation sites follow: N45 and N159. Residues 140–211 enclose the UPAR/Ly6 domain; sequence CPTCVALGTC…PMFVREACPH (72 aa). Residue N222 is the site of GPI-anchor amidated asparagine attachment. A propeptide spans 223–249 (removed in mature form); the sequence is GATCLPIPVWGLQLLLPLLLPSFIHFS.

As to quaternary structure, interacts with VAMP3. Interacts with LY6K. Interacts with DPEP3; co-localized on the cell surface of spermatocytes, spermatids, and testicular spermatozoa, co-localized only in cytoplasmic droplets of caput and corpus epididymal sperm. Interacts with ADAM5. In terms of processing, N-glycosylated; by high mannose and/or biantennary complex and/or certain types of hybrid oligosaccharides; possesses different oligosaccharides chains according to its subcellular localization in the testis. Sheds from membrane raft by ACE and released from the cell surface of epididymal sperm while it passes through the caput epididymis leading to disappearance of TEX101 on spermatozoa; is essential to produce fertile spermatozoa. In terms of tissue distribution, detected in testis and spermatogonia. Not detected in spermatocytes. Detected in blood leukocytes.

It localises to the cell membrane. It is found in the membrane raft. Its subcellular location is the cytoplasmic vesicle. The protein resides in the secretory vesicle. The protein localises to the acrosome. It localises to the secreted. Functionally, plays a role in fertilization by controlling binding of sperm to zona pellucida and migration of spermatozoa into the oviduct. May play a role in signal transduction and promote protein tyrosine phosphorylation. The chain is Testis-expressed protein 101 from Homo sapiens (Human).